Here is a 373-residue protein sequence, read N- to C-terminus: UDP-N-acetylglucosamine--N-acetylmuramyl-(pentapeptide) pyrophosphoryl-undecaprenol N-acetylglucosamine transferase (373 aa).

Residues 10 to 12, asparagine 124, serine 195, and glutamine 297 contribute to the UDP-N-acetyl-alpha-D-glucosamine site; that span reads TGG.

This sequence belongs to the glycosyltransferase 28 family. MurG subfamily.

The protein localises to the cell membrane. The catalysed reaction is Mur2Ac(oyl-L-Ala-gamma-D-Glu-L-Lys-D-Ala-D-Ala)-di-trans,octa-cis-undecaprenyl diphosphate + UDP-N-acetyl-alpha-D-glucosamine = beta-D-GlcNAc-(1-&gt;4)-Mur2Ac(oyl-L-Ala-gamma-D-Glu-L-Lys-D-Ala-D-Ala)-di-trans,octa-cis-undecaprenyl diphosphate + UDP + H(+). The protein operates within cell wall biogenesis; peptidoglycan biosynthesis. Cell wall formation. Catalyzes the transfer of a GlcNAc subunit on undecaprenyl-pyrophosphoryl-MurNAc-pentapeptide (lipid intermediate I) to form undecaprenyl-pyrophosphoryl-MurNAc-(pentapeptide)GlcNAc (lipid intermediate II). The protein is UDP-N-acetylglucosamine--N-acetylmuramyl-(pentapeptide) pyrophosphoryl-undecaprenol N-acetylglucosamine transferase of Oenococcus oeni (strain ATCC BAA-331 / PSU-1).